The chain runs to 800 residues: Phosphate transporter PHO1 homolog 9 (800 aa).

The SPX domain maps to 1 to 346; the sequence is MKFGREFETQ…SRNASKPYLN (346 aa). At 1 to 398 the chain is on the cytoplasmic side; that stretch reads MKFGREFETQ…KTKREKHRIT (398 aa). Disordered stretches follow at residues 38–77, 91–119, and 212–234; these read QKQQ…PGLS, NRAS…HNHH, and PDLN…PAPS. Residues 42 to 51 are compositionally biased toward pro residues; it reads RPPPPPPPPS. Gly residues predominate over residues 63 to 75; the sequence is GEGGGGGGGGGPG. The segment covering 95-119 has biased composition (basic residues); it reads RSPKKSHKHHNPLSSKRHHHHHNHH. Over residues 216–229 the composition is skewed to polar residues; the sequence is SVASAPSSPHSTMR. Residues 399–419 traverse the membrane as a helical segment; it reads YFLGFFSGCAVALAIAITVLV. The Extracellular portion of the chain corresponds to 420–439; that stretch reads HIRGLTKSEGRHQYMENIFP. Residues 440–460 traverse the membrane as a helical segment; it reads LYSLFGFVAVHLFMYAADIYF. The Cytoplasmic segment spans residues 461-483; the sequence is WSRYRVNYPFIFGFEQGNDLGYR. A helical transmembrane segment spans residues 484 to 504; the sequence is EVLLVGSGLAVLTFGGVISNL. At 505 to 520 the chain is on the extracellular side; the sequence is DMEMDPRTKSFSVITE. Residues 521–541 form a helical membrane-spanning segment; it reads LVPLALLVCLMMVLFCPFNII. Residues 542–670 lie on the Cytoplasmic side of the membrane; the sequence is YRSSRYFFVG…IFEMKRGTYW (129 aa). The EXS domain maps to 606–800; the sequence is YDSEIYKELY…FQELGGSKSV (195 aa). Residues 671–691 traverse the membrane as a helical segment; that stretch reads LTVAVTTSSIATLFNTYWDIF. Residues 692-718 are Extracellular-facing; sequence RDWGLMNRNSKNPWLRDKLLVPYKSIY. The helical transmembrane segment at 719–739 threads the bilayer; sequence FIVMVANVVLRLAWMQTVLGI. The Cytoplasmic segment spans residues 740–800; that stretch reads KEAPFLHKRA…FQELGGSKSV (61 aa).

Belongs to the SYG1 (TC 2.A.94) family. In terms of tissue distribution, specifically expressed in pollen grains.

It localises to the cell membrane. May transport inorganic phosphate (Pi). The polypeptide is Phosphate transporter PHO1 homolog 9 (PHO1-H9) (Arabidopsis thaliana (Mouse-ear cress)).